A 62-amino-acid chain; its full sequence is Small ribosomal subunit protein eS27 (62 aa).

Zn(2+) contacts are provided by Cys17, Cys20, Cys36, and Cys39. The C4-type zinc-finger motif lies at 17–39 (CNDCENEQIIFGSASRKITCVVC).

It belongs to the eukaryotic ribosomal protein eS27 family. As to quaternary structure, part of the 30S ribosomal subunit. Zn(2+) serves as cofactor.

The polypeptide is Small ribosomal subunit protein eS27 (Methanosarcina mazei (strain ATCC BAA-159 / DSM 3647 / Goe1 / Go1 / JCM 11833 / OCM 88) (Methanosarcina frisia)).